The sequence spans 404 residues: Arginine biosynthesis bifunctional protein ArgJ (404 aa).

Residues Thr166, Lys189, Thr200, Glu280, Asn399, and Ser404 each coordinate substrate. Catalysis depends on Thr200, which acts as the Nucleophile.

It belongs to the ArgJ family. As to quaternary structure, heterotetramer of two alpha and two beta chains.

It is found in the cytoplasm. It carries out the reaction N(2)-acetyl-L-ornithine + L-glutamate = N-acetyl-L-glutamate + L-ornithine. The catalysed reaction is L-glutamate + acetyl-CoA = N-acetyl-L-glutamate + CoA + H(+). Its pathway is amino-acid biosynthesis; L-arginine biosynthesis; L-ornithine and N-acetyl-L-glutamate from L-glutamate and N(2)-acetyl-L-ornithine (cyclic): step 1/1. It functions in the pathway amino-acid biosynthesis; L-arginine biosynthesis; N(2)-acetyl-L-ornithine from L-glutamate: step 1/4. Catalyzes two activities which are involved in the cyclic version of arginine biosynthesis: the synthesis of N-acetylglutamate from glutamate and acetyl-CoA as the acetyl donor, and of ornithine by transacetylation between N(2)-acetylornithine and glutamate. In Mycobacterium bovis (strain ATCC BAA-935 / AF2122/97), this protein is Arginine biosynthesis bifunctional protein ArgJ.